A 389-amino-acid chain; its full sequence is S-adenosylmethionine synthase (389 aa).

An ATP-binding site is contributed by H16. D18 is a binding site for Mg(2+). A K(+)-binding site is contributed by E44. Residues E57 and Q101 each contribute to the L-methionine site. Residues 101–111 are flexible loop; the sequence is QSVDIAQGVNE. ATP is bound by residues 168-170, 234-235, D243, 249-250, A266, and K270; these read DAK, RF, and RK. An L-methionine-binding site is contributed by D243. K274 is an L-methionine binding site.

This sequence belongs to the AdoMet synthase family. Homotetramer; dimer of dimers. It depends on Mg(2+) as a cofactor. K(+) serves as cofactor.

The protein localises to the cytoplasm. It carries out the reaction L-methionine + ATP + H2O = S-adenosyl-L-methionine + phosphate + diphosphate. It functions in the pathway amino-acid biosynthesis; S-adenosyl-L-methionine biosynthesis; S-adenosyl-L-methionine from L-methionine: step 1/1. Its function is as follows. Catalyzes the formation of S-adenosylmethionine (AdoMet) from methionine and ATP. The overall synthetic reaction is composed of two sequential steps, AdoMet formation and the subsequent tripolyphosphate hydrolysis which occurs prior to release of AdoMet from the enzyme. The polypeptide is S-adenosylmethionine synthase (Magnetococcus marinus (strain ATCC BAA-1437 / JCM 17883 / MC-1)).